Consider the following 119-residue polypeptide: UPF0231 protein YPTB0717 (119 aa).

This sequence belongs to the UPF0231 family.

This is UPF0231 protein YPTB0717 from Yersinia pseudotuberculosis serotype I (strain IP32953).